Here is a 127-residue protein sequence, read N- to C-terminus: Fluoride-specific ion channel FluC (127 aa).

4 consecutive transmembrane segments (helical) span residues 4 to 24, 35 to 55, 71 to 91, and 103 to 123; these read LLLAVFIGGGTGSVARWFLSM, LGTLTANLIGAFIIGVGLAWF, TGFCGGLTTFSTFSAEVVFLL, and IAVNMLGSFAMTALAFWLFSA. Na(+) is bound by residues G75 and T78.

It belongs to the fluoride channel Fluc/FEX (TC 1.A.43) family.

It localises to the cell inner membrane. It carries out the reaction fluoride(in) = fluoride(out). Na(+) is not transported, but it plays an essential structural role and its presence is essential for fluoride channel function. In terms of biological role, fluoride-specific ion channel. Important for reducing fluoride concentration in the cell, thus reducing its toxicity. The chain is Fluoride-specific ion channel FluC from Enterobacter sp. (strain 638).